The primary structure comprises 253 residues: Tabinhibitin 3 (253 aa).

A signal peptide spans 1-22; that stretch reads MTLKRIFCAALALIVLQSVASA. The SCP domain occupies 66–209; that stretch reads LQKTNWLRGV…LKRALFTCNF (144 aa). The Cell attachment site signature appears at 222–224; sequence RGD.

The protein belongs to the CRISP family. As to expression, expressed in salivary glands.

The protein resides in the secreted. Inhibits platelet aggregation induced by all agonists tested (ADP, arachidonic acid, the thromboxane A2 analog U46619, thrombin, and snake venom snaclecs (TMVA that activates platelet through GPIB, and stejnulxin that specifically acts through GPVI (GP6))). May act by competing with fibrinogen for binding to glycoprotein IIb/IIIa (ITGA2B/ITGB3). The sequence is that of Tabinhibitin 3 from Tabanus yao (Horsefly).